The chain runs to 270 residues: Putative hydro-lyase H16_B1759 (270 aa).

The protein belongs to the D-glutamate cyclase family.

This chain is Putative hydro-lyase H16_B1759, found in Cupriavidus necator (strain ATCC 17699 / DSM 428 / KCTC 22496 / NCIMB 10442 / H16 / Stanier 337) (Ralstonia eutropha).